The following is a 173-amino-acid chain: Putative phosphoesterase GK0864 (173 aa).

His34 serves as the catalytic Proton donor. 2 short sequence motifs (HXTX) span residues His34–Leu37 and His115–Ile118. His115 serves as the catalytic Proton acceptor.

It belongs to the 2H phosphoesterase superfamily. YjcG family.

The chain is Putative phosphoesterase GK0864 from Geobacillus kaustophilus (strain HTA426).